Reading from the N-terminus, the 389-residue chain is Geranylgeranyl pyrophosphate synthase A (389 aa).

3 residues coordinate isopentenyl diphosphate: lysine 99, arginine 102, and histidine 131. The Mg(2+) site is built by aspartate 138 and aspartate 142. Dimethylallyl diphosphate is bound at residue arginine 147. Position 148 (arginine 148) interacts with isopentenyl diphosphate.

Belongs to the FPP/GGPP synthase family. The cofactor is Mg(2+).

It is found in the cytoplasm. The catalysed reaction is isopentenyl diphosphate + (2E)-geranyl diphosphate = (2E,6E)-farnesyl diphosphate + diphosphate. It catalyses the reaction isopentenyl diphosphate + (2E,6E)-farnesyl diphosphate = (2E,6E,10E)-geranylgeranyl diphosphate + diphosphate. Its pathway is isoprenoid biosynthesis; farnesyl diphosphate biosynthesis; farnesyl diphosphate from geranyl diphosphate and isopentenyl diphosphate: step 1/1. It functions in the pathway isoprenoid biosynthesis; geranylgeranyl diphosphate biosynthesis; geranylgeranyl diphosphate from farnesyl diphosphate and isopentenyl diphosphate: step 1/1. Catalyzes the trans-addition of the 2 molecules of isopentenyl diphosphate (IPP) onto geranyl diphosphate (GDP) to form geranylgeranyl pyrophosphate (GGDP). Does not catalyze the conversion of dimethylallyl diphosphate (DMAPP). The chain is Geranylgeranyl pyrophosphate synthase A (GGS-A) from Phomopsis amygdali (Fusicoccum amygdali).